The primary structure comprises 508 residues: 2'-5'-oligoadenylate synthase-like protein 2 (508 aa).

Ser69 contacts ATP. Mg(2+)-binding residues include Asp81, Asp83, and Asp154. Residues Arg213 and Lys216 each coordinate ATP. In terms of domain architecture, Ubiquitin-like spans 435-473 (ILVFVKYPGGQSKPFTIDPDDTILDLKEKIEDAGGPCAE).

Belongs to the 2-5A synthase family. Requires Mg(2+) as cofactor. As to expression, strongly expressed in spleen dendritic cells, whereas, in bone marrow-derived dendritic cells, the amount increases during the maturation process. Expressed in many organs, the highest levels being in thymus, lung, and bone marrow.

The catalysed reaction is 3 ATP = 5'-triphosphoadenylyl-(2'-&gt;5')-adenylyl-(2'-&gt;5')-adenosine + 2 diphosphate. Produced as a latent enzyme which is activated by dsRNA generated during the course of viral infection. The dsRNA activator must be at least 15 nucleotides long, and no modification of the 2'-hydroxyl group is tolerated. ssRNA or dsDNA do not act as activators. Functionally, interferon-induced, dsRNA-activated antiviral enzyme which plays a critical role in cellular innate antiviral response. Synthesizes oligomers of 2'-5'-oligoadenylates (2-5A) from ATP which then bind to the inactive monomeric form of ribonuclease L (RNase L) leading to its dimerization and subsequent activation. Activation of RNase L leads to degradation of cellular as well as viral RNA, resulting in the inhibition of protein synthesis, thus terminating viral replication. Can mediate the antiviral effect via the classical RNase L-dependent pathway or an alternative antiviral pathway independent of RNase L. The polypeptide is 2'-5'-oligoadenylate synthase-like protein 2 (Oasl2) (Mus musculus (Mouse)).